We begin with the raw amino-acid sequence, 678 residues long: Translation factor GUF1 homolog, chloroplastic (678 aa).

The transit peptide at 1-43 directs the protein to the chloroplast; that stretch reads MASILLSLNTHTLLPLHTRTRTTKTTLKILRFSHKLPPSSPFY. The tr-type G domain maps to 81-262; sequence KNIRNFCIIA…AIVERVPPPR (182 aa). GTP contacts are provided by residues 90–97, 155–159, and 209–212; these read AHIDHGKS, DTPGH, and NKID.

The protein belongs to the TRAFAC class translation factor GTPase superfamily. Classic translation factor GTPase family. LepA subfamily.

It is found in the plastid. The protein localises to the chloroplast. It catalyses the reaction GTP + H2O = GDP + phosphate + H(+). Its function is as follows. Promotes chloroplast protein synthesis. May act as a fidelity factor of the translation reaction, by catalyzing a one-codon backward translocation of tRNAs on improperly translocated ribosomes. The chain is Translation factor GUF1 homolog, chloroplastic from Populus trichocarpa (Western balsam poplar).